A 442-amino-acid chain; its full sequence is GTPase Der (442 aa).

2 consecutive EngA-type G domains span residues 3–167 (PTIV…PADD) and 177–350 (PRVA…AAAM). GTP-binding positions include 9 to 16 (GRPNVGKS), 56 to 60 (DTAGF), 119 to 122 (NKAE), 183 to 190 (GRPNVGKS), 230 to 234 (DTAGL), and 295 to 298 (NKWD). Residues 351-435 (SNLSTPRLTR…PLRIQFRTAH (85 aa)) form the KH-like domain.

It belongs to the TRAFAC class TrmE-Era-EngA-EngB-Septin-like GTPase superfamily. EngA (Der) GTPase family. As to quaternary structure, associates with the 50S ribosomal subunit.

Its function is as follows. GTPase that plays an essential role in the late steps of ribosome biogenesis. The sequence is that of GTPase Der from Azoarcus sp. (strain BH72).